We begin with the raw amino-acid sequence, 72 residues long: Large ribosomal subunit protein uL29 (72 aa).

This sequence belongs to the universal ribosomal protein uL29 family.

This Prochlorococcus marinus (strain MIT 9312) protein is Large ribosomal subunit protein uL29.